A 415-amino-acid chain; its full sequence is Serine hydroxymethyltransferase (415 aa).

Residues L117 and 121-123 (GHL) contribute to the (6S)-5,6,7,8-tetrahydrofolate site. N6-(pyridoxal phosphate)lysine is present on K226.

This sequence belongs to the SHMT family. As to quaternary structure, homodimer. Pyridoxal 5'-phosphate serves as cofactor.

Its subcellular location is the cytoplasm. The enzyme catalyses (6R)-5,10-methylene-5,6,7,8-tetrahydrofolate + glycine + H2O = (6S)-5,6,7,8-tetrahydrofolate + L-serine. It functions in the pathway one-carbon metabolism; tetrahydrofolate interconversion. It participates in amino-acid biosynthesis; glycine biosynthesis; glycine from L-serine: step 1/1. Catalyzes the reversible interconversion of serine and glycine with tetrahydrofolate (THF) serving as the one-carbon carrier. This reaction serves as the major source of one-carbon groups required for the biosynthesis of purines, thymidylate, methionine, and other important biomolecules. Also exhibits THF-independent aldolase activity toward beta-hydroxyamino acids, producing glycine and aldehydes, via a retro-aldol mechanism. This is Serine hydroxymethyltransferase from Leptospira interrogans serogroup Icterohaemorrhagiae serovar copenhageni (strain Fiocruz L1-130).